Reading from the N-terminus, the 465-residue chain is Serine/threonine-protein kinase 38 (465 aa).

Ala-2 bears the N-acetylalanine mark. The interaction with S100B stretch occupies residues 62 to 87 (KRLRRSAHARKETEFLRLKRTRLGLE). Thr-74 bears the Phosphothreonine mark. The Protein kinase domain occupies 89 to 382 (FESLKVIGRG…VEEIKNNLFF (294 aa)). ATP is bound by residues 95–103 (IGRGAFGEV) and Lys-118. The Proton acceptor role is filled by Asp-212. Ser-264 carries the phosphoserine modification. Ser-281 is subject to Phosphoserine; by autocatalysis. The short motif at 306-311 (WSLGVI) is the UFM1-interacting motif (UFIM) element. The 73-residue stretch at 383 to 455 (EGVDWEHIRE…KRFEGLTARG (73 aa)) folds into the AGC-kinase C-terminal domain. Position 444 is a phosphothreonine; by STK24/MST3 (Thr-444).

Belongs to the protein kinase superfamily. AGC Ser/Thr protein kinase family. Homodimeric S100B binds two molecules of STK38. Interacts with MOB1 and MOB2. Interacts with MAP3K1 and MAP3K2 (via the kinase catalytic domain). Forms a tripartite complex with MOBKL1B and STK3/MST2. Interacts with MICAL1; leading to inhibit the protein kinase activity by antagonizing activation by MST1/STK4. Mg(2+) is required as a cofactor. Post-translationally, ISGylated. Phosphorylated by STK3/MST2 and this is enhanced by MOBKL1B. Expressed at high levels in spleen, lung, thymus, brain and fat tissue.

It localises to the nucleus. It is found in the cytoplasm. The protein resides in the chromosome. It carries out the reaction L-seryl-[protein] + ATP = O-phospho-L-seryl-[protein] + ADP + H(+). The catalysed reaction is L-threonyl-[protein] + ATP = O-phospho-L-threonyl-[protein] + ADP + H(+). Activated by binding of S100B which releases autoinhibitory N-lobe interactions, enabling ATP to bind and the autophosphorylation of Ser-281. Thr-444 then undergoes calcium-dependent phosphorylation by STK24/MST3. Interactions between phosphorylated Thr-444 and the N-lobe promote additional structural changes that complete the activation of the kinase. Autoinhibition is also released by the binding of MOB1/MOBKL1A and MOB2/HCCA2 to the N-terminal of STK38. Serine/threonine-protein kinase that acts as a negative regulator of MAP3K1/2 signaling. Converts MAP3K2 from its phosphorylated form to its non-phosphorylated form and inhibits autophosphorylation of MAP3K2. Acts as an ufmylation 'reader' in a kinase-independent manner: specifically recognizes and binds mono-ufmylated histone H4 in response to DNA damage, promoting the recruitment of SUV39H1 to the double-strand breaks, resulting in ATM activation. The polypeptide is Serine/threonine-protein kinase 38 (Mus musculus (Mouse)).